Consider the following 911-residue polypeptide: Protein argonaute 4B (911 aa).

2 disordered regions span residues 1 to 51 (MDAH…RPGL) and 149 to 171 (KTAANGSPGGNDSPGGSDRKRVR). The PAZ domain occupies 281–396 (PVIDFLLANQ…FPIELCSLIP (116 aa)). In terms of domain architecture, Piwi spans 565–872 (FLLCLLPERK…AAAQVGTFLK (308 aa)).

It belongs to the argonaute family. Ago subfamily.

Functionally, probably involved in the RNA silencing pathway. May bind to short RNAs such as microRNAs (miRNAs) or short interfering RNAs (siRNAs), and represses the translation of mRNAs which are complementary to them. In Oryza sativa subsp. japonica (Rice), this protein is Protein argonaute 4B (AGO4B).